The sequence spans 262 residues: Short-chain Z-isoprenyl diphosphate synthase (262 aa).

The active site involves D40. Residue D40 coordinates Mg(2+). Substrate is bound by residues G41–R44, W45, and S86–E88. N89 serves as the catalytic Proton acceptor. Residues R92, R211, and R217–S219 contribute to the substrate site. E230 is a Mg(2+) binding site.

It belongs to the UPP synthase family. Z-FPP synthase subfamily. Mg(2+) serves as cofactor.

It catalyses the reaction isopentenyl diphosphate + (2E)-geranyl diphosphate = (2Z,6E)-farnesyl diphosphate + diphosphate. It functions in the pathway phospholipid metabolism; decaprenyl phosphate biosynthesis. Generates Z-farnesyl diphosphate (Z-FPP) from isopentenyl pyrophosphate (IPP). Z-FPP is the precursor of decaprenyl diphosphate, which has a central role in the biosynthesis of the mycobacterial cell wall. The chain is Short-chain Z-isoprenyl diphosphate synthase from Mycobacterium bovis (strain ATCC BAA-935 / AF2122/97).